Consider the following 237-residue polypeptide: Neurogenin-1 (237 aa).

A disordered region spans residues 35–83 (LQQAASASGPPAPARRGAPNISRASEVPGAQDDEQERRRRRGRTRVRSE). A compositionally biased stretch (low complexity) spans 38–53 (AASASGPPAPARRGAP). A bHLH domain is found at 92 to 144 (SRRVKANDRERNRMHNLNAALDALRSVLPSFPDDTKLTKIETLRFAYNYIWAL). Residues 175-209 (GPPSPASDAESWGSGAAAASPLSDPSSPAASEDFT) are disordered. Positions 180 to 207 (ASDAESWGSGAAAASPLSDPSSPAASED) are enriched in low complexity.

As to quaternary structure, efficient DNA binding requires dimerization with another bHLH protein. In terms of tissue distribution, expression restricted to the embryonic nervous system.

The protein resides in the nucleus. Acts as a transcriptional regulator. Involved in the initiation of neuronal differentiation. Activates transcription by binding to the E box (5'-CANNTG-3'). Associates with chromatin to enhancer regulatory elements in genes encoding key transcriptional regulators of neurogenesis. This is Neurogenin-1 (NEUROG1) from Homo sapiens (Human).